Consider the following 300-residue polypeptide: Solute carrier family 25 member 35 (300 aa).

Solcar repeat units follow at residues 1-90 (MDFL…AESR), 100-193 (HSPV…IKDL), and 203-294 (QSWK…LRSF). 6 consecutive transmembrane segments (helical) span residues 38 to 58 (TYQR…KVDG), 59 to 79 (LAAL…MNGI), 91 to 119 (GYLH…GAYL), 169 to 190 (AVGG…FSSI), 205 to 225 (WKVA…AMTP), and 277 to 300 (LGPH…TYAK).

It belongs to the mitochondrial carrier (TC 2.A.29) family.

Its subcellular location is the mitochondrion inner membrane. It catalyses the reaction a dicarboxylate(in) + sulfate(out) = a dicarboxylate(out) + sulfate(in). Its function is as follows. Putative antiporter that exchanges dicarboxylates and sulfur oxoanions across the inner membrane of mitochondria. The sequence is that of Solute carrier family 25 member 35 (Slc25a35) from Mus musculus (Mouse).